Reading from the N-terminus, the 79-residue chain is Cytochrome b (79 aa).

The next 3 membrane-spanning stretches (helical) occupy residues 1–7 (SALFLAM), 31–52 (WLIRYIHANGASLFFICLYLHI), and 67–79 (WNIGIILLFLTMA). Residues His-37 and His-51 each coordinate heme b.

Belongs to the cytochrome b family. The cytochrome bc1 complex contains 11 subunits: 3 respiratory subunits (MT-CYB, CYC1 and UQCRFS1), 2 core proteins (UQCRC1 and UQCRC2) and 6 low-molecular weight proteins (UQCRH/QCR6, UQCRB/QCR7, UQCRQ/QCR8, UQCR10/QCR9, UQCR11/QCR10 and a cleavage product of UQCRFS1). This cytochrome bc1 complex then forms a dimer. Requires heme b as cofactor.

It is found in the mitochondrion inner membrane. Functionally, component of the ubiquinol-cytochrome c reductase complex (complex III or cytochrome b-c1 complex) that is part of the mitochondrial respiratory chain. The b-c1 complex mediates electron transfer from ubiquinol to cytochrome c. Contributes to the generation of a proton gradient across the mitochondrial membrane that is then used for ATP synthesis. The sequence is that of Cytochrome b (MT-CYB) from Dipodomys panamintinus (Panamint kangaroo rat).